The following is a 118-amino-acid chain: Large ribosomal subunit protein bL19 (118 aa).

Belongs to the bacterial ribosomal protein bL19 family.

This protein is located at the 30S-50S ribosomal subunit interface and may play a role in the structure and function of the aminoacyl-tRNA binding site. In Salinispora arenicola (strain CNS-205), this protein is Large ribosomal subunit protein bL19.